The following is a 383-amino-acid chain: MSVTAAQGFTASGIAAGIKENGNPDLALVVNNGPRLAAAGVFTSNRVKAAPVLWSEQVLKGGVVSAVVLNSGGANACTGPKGFQDTHATAEKVAETLDLNAGEVAVASTGLIGVLLPMDKLLPGVERAVAGLSEHGGEKAAIAIKTTDTVHKTSVVTKDGWTVGGMAKGAGMLAPGLATMLVVLTTDADLDRDALDRALRAATRTTFDRVDSDGCMSTNDTVLLLASGASEVTPKQEEFAEAVRAVCDDLGQQLIQDAEGASKDIKVEVVGAATEDDAVEVGRSIARNNLLKCAIHGEDPNWGRVLSAIGTTRAAFEPDQLNVAINGVWVCKKGGVGEDRDLVDMRYREVHIVADLAAGTETATIWTNDLTADYVHENSAYSS.

Positions 146, 168, 179, 259, 378, and 383 each coordinate substrate. Residue Thr179 is the Nucleophile of the active site.

Belongs to the ArgJ family. In terms of assembly, heterotetramer of two alpha and two beta chains.

The protein localises to the cytoplasm. It carries out the reaction N(2)-acetyl-L-ornithine + L-glutamate = N-acetyl-L-glutamate + L-ornithine. It catalyses the reaction L-glutamate + acetyl-CoA = N-acetyl-L-glutamate + CoA + H(+). The protein operates within amino-acid biosynthesis; L-arginine biosynthesis; L-ornithine and N-acetyl-L-glutamate from L-glutamate and N(2)-acetyl-L-ornithine (cyclic): step 1/1. It functions in the pathway amino-acid biosynthesis; L-arginine biosynthesis; N(2)-acetyl-L-ornithine from L-glutamate: step 1/4. Its function is as follows. Catalyzes two activities which are involved in the cyclic version of arginine biosynthesis: the synthesis of N-acetylglutamate from glutamate and acetyl-CoA as the acetyl donor, and of ornithine by transacetylation between N(2)-acetylornithine and glutamate. The polypeptide is Arginine biosynthesis bifunctional protein ArgJ (Streptomyces avermitilis (strain ATCC 31267 / DSM 46492 / JCM 5070 / NBRC 14893 / NCIMB 12804 / NRRL 8165 / MA-4680)).